The following is a 77-amino-acid chain: MGKFKLRPDEIREMTPEERREKLKELKAELLREMTSKSISGVPDNPGRVKEIKKNIARILTTEREEELRKIRETEKG.

Belongs to the universal ribosomal protein uL29 family.

In Methanopyrus kandleri (strain AV19 / DSM 6324 / JCM 9639 / NBRC 100938), this protein is Large ribosomal subunit protein uL29.